A 239-amino-acid chain; its full sequence is Ribosomal RNA small subunit methyltransferase G (239 aa).

Residues G77, F82, 128 to 129, and R147 each bind S-adenosyl-L-methionine; that span reads AE.

Belongs to the methyltransferase superfamily. RNA methyltransferase RsmG family.

It is found in the cytoplasm. Its function is as follows. Specifically methylates the N7 position of guanine in position 535 of 16S rRNA. In Bacillus mycoides (strain KBAB4) (Bacillus weihenstephanensis), this protein is Ribosomal RNA small subunit methyltransferase G.